A 267-amino-acid polypeptide reads, in one-letter code: 2-dehydro-3-deoxyphosphooctonate aldolase (267 aa).

It belongs to the KdsA family.

It localises to the cytoplasm. It catalyses the reaction D-arabinose 5-phosphate + phosphoenolpyruvate + H2O = 3-deoxy-alpha-D-manno-2-octulosonate-8-phosphate + phosphate. Its pathway is carbohydrate biosynthesis; 3-deoxy-D-manno-octulosonate biosynthesis; 3-deoxy-D-manno-octulosonate from D-ribulose 5-phosphate: step 2/3. The protein operates within bacterial outer membrane biogenesis; lipopolysaccharide biosynthesis. This is 2-dehydro-3-deoxyphosphooctonate aldolase from Campylobacter jejuni subsp. doylei (strain ATCC BAA-1458 / RM4099 / 269.97).